We begin with the raw amino-acid sequence, 249 residues long: U1 small nuclear ribonucleoprotein usp102 (249 aa).

Positions 1-25 are disordered; it reads MDPQTNSHQEVQQPSPKETDSQTPS. The region spanning 26–105 is the RRM 1 domain; the sequence is ETLYIRNIEE…KPMMIQYSKS (80 aa). The segment at 113-157 is disordered; it reads RESPEEIETRKKDRKNRREMLKRTSALQPAAPKPTHKKPVPKRNV. Basic and acidic residues predominate over residues 114-134; that stretch reads ESPEEIETRKKDRKNRREMLK. Positions 174–247 constitute an RRM 2 domain; sequence KVLLLQNIPQ…NQIKVTFARK (74 aa).

Belongs to the RRM U1 A/B'' family. As to quaternary structure, component of the spliceosome where it is associated with snRNP U1.

It is found in the nucleus. The protein localises to the nucleolus. Involved in nuclear mRNA splicing. The sequence is that of U1 small nuclear ribonucleoprotein usp102 from Schizosaccharomyces pombe (strain 972 / ATCC 24843) (Fission yeast).